We begin with the raw amino-acid sequence, 102 residues long: RNA-binding protein Hfq (102 aa).

The 60-residue stretch at 9 to 68 (DPFLNALRRERVPVSIYLVNGIKLQGQIESFDQFVILLKNTVSQMVYKHAISTVVPSRPV) folds into the Sm domain. Residues 63–102 (VPSRPVSHHSNNAGGGSNNYHHSNNAQPSSAASQDSEDAE) form a disordered region. Residues 70 to 96 (HHSNNAGGGSNNYHHSNNAQPSSAASQ) show a composition bias toward low complexity.

Belongs to the Hfq family. In terms of assembly, homohexamer.

In terms of biological role, RNA chaperone that binds small regulatory RNA (sRNAs) and mRNAs to facilitate mRNA translational regulation in response to envelope stress, environmental stress and changes in metabolite concentrations. Also binds with high specificity to tRNAs. This Cronobacter sakazakii (strain ATCC BAA-894) (Enterobacter sakazakii) protein is RNA-binding protein Hfq.